Consider the following 347-residue polypeptide: Methylthioribose-1-phosphate isomerase (347 aa).

Substrate contacts are provided by residues 45-47, arginine 88, and glutamine 197; that span reads RGA. Residue aspartate 238 is the Proton donor of the active site. Residue 248-249 coordinates substrate; the sequence is NK.

This sequence belongs to the eIF-2B alpha/beta/delta subunits family. MtnA subfamily.

It carries out the reaction 5-(methylsulfanyl)-alpha-D-ribose 1-phosphate = 5-(methylsulfanyl)-D-ribulose 1-phosphate. It participates in amino-acid biosynthesis; L-methionine biosynthesis via salvage pathway; L-methionine from S-methyl-5-thio-alpha-D-ribose 1-phosphate: step 1/6. Functionally, catalyzes the interconversion of methylthioribose-1-phosphate (MTR-1-P) into methylthioribulose-1-phosphate (MTRu-1-P). This chain is Methylthioribose-1-phosphate isomerase, found in Trichormus variabilis (strain ATCC 29413 / PCC 7937) (Anabaena variabilis).